Reading from the N-terminus, the 152-residue chain is Lipoprotein signal peptidase (152 aa).

Helical transmembrane passes span 55–75 (NKMW…VFYM) and 85–105 (LGIS…DRVF). Active-site residues include D111 and D129. Residues 124–144 (VFNIADSALCIGVVLIIIQTV) form a helical membrane-spanning segment.

It belongs to the peptidase A8 family.

The protein localises to the cell membrane. The catalysed reaction is Release of signal peptides from bacterial membrane prolipoproteins. Hydrolyzes -Xaa-Yaa-Zaa-|-(S,diacylglyceryl)Cys-, in which Xaa is hydrophobic (preferably Leu), and Yaa (Ala or Ser) and Zaa (Gly or Ala) have small, neutral side chains.. It functions in the pathway protein modification; lipoprotein biosynthesis (signal peptide cleavage). This protein specifically catalyzes the removal of signal peptides from prolipoproteins. The sequence is that of Lipoprotein signal peptidase from Bacillus mycoides (strain KBAB4) (Bacillus weihenstephanensis).